A 792-amino-acid chain; its full sequence is Alpha-1,6-mannosylglycoprotein 6-beta-N-acetylglucosaminyltransferase B (792 aa).

Residues 1 to 24 are Cytoplasmic-facing; sequence MITVNPDGKIMVRRCLVTLRPFRL. The chain crosses the membrane as a helical; Signal-anchor for type II membrane protein span at residues 25 to 45; the sequence is FVLGIGFFTLCFLMTSLGGQF. The Lumenal segment spans residues 46-792; sequence SARRLGDSPF…GQVALCQGCL (747 aa). Asn127 is a glycosylation site (N-linked (GlcNAc...) asparagine). 9 disulfide bridges follow: Cys157-Cys195, Cys168-Cys208, Cys184-Cys353, Cys387-Cys644, Cys700-Cys775, Cys704-Cys777, Cys711-Cys764, Cys732-Cys753, and Cys788-Cys791.

This sequence belongs to the glycosyltransferase 18 family. It depends on Mn(2+) as a cofactor. Predominantly expressed in brain. Expressed in all areas of the adult and fetal brain. Also expressed at much lower levels in testis, spleen and thymus.

It is found in the golgi apparatus membrane. The enzyme catalyses N(4)-{beta-D-GlcNAc-(1-&gt;2)-[beta-D-GlcNAc-(1-&gt;4)]-alpha-D-Man-(1-&gt;3)-[beta-D-GlcNAc-(1-&gt;2)-alpha-D-Man-(1-&gt;6)]-beta-D-Man-(1-&gt;4)-beta-D-GlcNAc-(1-&gt;4)-beta-D-GlcNAc}-L-asparaginyl-[protein] + UDP-N-acetyl-alpha-D-glucosamine = N(4)-{beta-D-GlcNAc-(1-&gt;2)-[beta-D-GlcNAc-(1-&gt;4)]-alpha-D-Man-(1-&gt;3)-[beta-D-GlcNAc-(1-&gt;2)-[beta-D-GlcNAc-(1-&gt;6)]-alpha-D-Man-(1-&gt;6)]-beta-D-Man-(1-&gt;4)-beta-D-GlcNAc-(1-&gt;4)-beta-D-GlcNAc}-L-asparaginyl-[protein] + UDP + H(+). The catalysed reaction is 3-O-[N-acetyl-beta-D-glucosaminyl-(1-&gt;2)-alpha-D-mannosyl]-L-seryl-[protein] + UDP-N-acetyl-alpha-D-glucosamine = O(3)-{N-acetyl-beta-D-glucosaminyl-(1-&gt;2)-[N-acetyl-beta-D-glucosaminyl-(1-&gt;6)]-alpha-D-mannosyl}-L-seryl-[protein] + UDP + H(+). It carries out the reaction 3-O-[N-acetyl-beta-D-glucosaminyl-(1-&gt;2)-alpha-D-mannosyl]-L-threonyl-[protein] + UDP-N-acetyl-alpha-D-glucosamine = O(3)-{N-acetyl-beta-D-glucosaminyl-(1-&gt;2)-[N-acetyl-beta-D-glucosaminyl-(1-&gt;6)]-alpha-D-mannosyl}-L-threonyl-[protein] + UDP + H(+). The protein operates within protein modification; protein glycosylation. Functionally, glycosyltransferase that acts on alpha-linked mannose of N-glycans and O-mannosyl glycans. Catalyzes the transfer of N-acetylglucosamine (GlcNAc) to the beta 1-6 linkage of the mannose residue of GlcNAc-beta1,2-Man-alpha on both the alpha1,3- and alpha1,6-linked mannose arms in the core structure of N-glycan. Also acts on the GlcNAc-beta1,2-Man-alpha1-Ser/Thr moiety, forming a 2,6-branched structure in brain O-mannosyl glycan. Plays an active role in modulating integrin and laminin-dependent adhesion and migration of neuronal cells via its activity in the O-mannosyl glycan pathway. The chain is Alpha-1,6-mannosylglycoprotein 6-beta-N-acetylglucosaminyltransferase B (MGAT5B) from Homo sapiens (Human).